Consider the following 435-residue polypeptide: Citrate synthase (435 aa).

Catalysis depends on residues H311 and D370.

This sequence belongs to the citrate synthase family.

The catalysed reaction is oxaloacetate + acetyl-CoA + H2O = citrate + CoA + H(+). It participates in carbohydrate metabolism; tricarboxylic acid cycle; isocitrate from oxaloacetate: step 1/2. This is Citrate synthase (gltA) from Rickettsia slovaca (strain 13-B).